Reading from the N-terminus, the 523-residue chain is MPAVGGIPPSGGNRKVYPGNLTLYVTVTCVVAAMGGLIFGYDIGISGGVTSMDSFLKKFFPSVYRKKKADESSNQYCQYDSQTLTMFTSSLYLAALIASLVASTITRKFGRKLSMLFGGVLFCAGAIINGAAKAVWMLILGRILLGFGIGFANQSVPLYLSEMAPYKYRGALNIGFQLSITIGILVANVLNYFFAKIKGGWGWRLSLGGAMVPALIITVGSLVLPDTPNSMIERGQHEEARAHLKRVRGVEDVDEEFTDLVHASEDSKKVEHPWRNLLQRKYRPHLSMAIAIPFFQQLTGINVIMFYAPVLFDTIGFGSDAALMSAVITGLVNVFATMVSIYGVDKWGRRFLFLEGGVQMLICQAIVAACIGAKFGVDGAPGDLPQWYAVVVVLFICIYVSGFAWSWGPLGWLVPSEIFPLEIRSAAQSVNVSVNMFFTFVVAQVFLIMLCHLKFGLFIFFSFFVLIMSIFVYYFLPETKGIPIEEMGQVWKQHWYWSRYVVDEDYPNGGLEMGKEGRIPKNV.

Topologically, residues 1–25 (MPAVGGIPPSGGNRKVYPGNLTLYV) are cytoplasmic. 12 helical membrane passes run 26–46 (TVTC…IGIS), 86–106 (MFTS…STIT), 120–140 (VLFC…MLIL), 143–163 (ILLG…LSEM), 172–192 (LNIG…VLNY), 205–225 (LSLG…LVLP), 298–320 (LTGI…FGSD), 327–347 (VITG…VDKW), 351–371 (FLFL…AACI), 387–407 (WYAV…AWSW), 433–453 (SVNM…LCHL), and 456–476 (GLFI…YYFL). The Cytoplasmic segment spans residues 477–523 (PETKGIPIEEMGQVWKQHWYWSRYVVDEDYPNGGLEMGKEGRIPKNV).

It belongs to the major facilitator superfamily. Sugar transporter (TC 2.A.1.1) family.

Its subcellular location is the membrane. In Ricinus communis (Castor bean), this protein is Sugar carrier protein C (STC).